We begin with the raw amino-acid sequence, 72 residues long: Alpha-elapitoxin-Dpp2a (72 aa).

Cystine bridges form between cysteine 3–cysteine 21, cysteine 14–cysteine 42, cysteine 27–cysteine 31, cysteine 46–cysteine 57, and cysteine 58–cysteine 63.

It belongs to the three-finger toxin family. Long-chain subfamily. Type II alpha-neurotoxin sub-subfamily. Expressed by the venom gland.

It localises to the secreted. Functionally, binds with high affinity to muscular (alpha-1/CHRNA1) and neuronal (alpha-7/CHRNA7) nicotinic acetylcholine receptor (nAChR) and inhibits acetylcholine from binding to the receptor, thereby impairing neuromuscular and neuronal transmission. The chain is Alpha-elapitoxin-Dpp2a from Dendroaspis polylepis polylepis (Black mamba).